The chain runs to 83 residues: Small ribosomal subunit protein bS16 (83 aa).

This sequence belongs to the bacterial ribosomal protein bS16 family.

This chain is Small ribosomal subunit protein bS16, found in Syntrophus aciditrophicus (strain SB).